A 340-amino-acid chain; its full sequence is DNA-directed RNA polymerase subunit alpha (340 aa).

An alpha N-terminal domain (alpha-NTD) region spans residues Met-1–Lys-233. An alpha C-terminal domain (alpha-CTD) region spans residues Arg-263–Asp-340.

It belongs to the RNA polymerase alpha chain family. In terms of assembly, in plastids the minimal PEP RNA polymerase catalytic core is composed of four subunits: alpha, beta, beta', and beta''. When a (nuclear-encoded) sigma factor is associated with the core the holoenzyme is formed, which can initiate transcription.

It localises to the plastid. It is found in the chloroplast. The enzyme catalyses RNA(n) + a ribonucleoside 5'-triphosphate = RNA(n+1) + diphosphate. Its function is as follows. DNA-dependent RNA polymerase catalyzes the transcription of DNA into RNA using the four ribonucleoside triphosphates as substrates. The chain is DNA-directed RNA polymerase subunit alpha (rpoA) from Anthoceros angustus (Hornwort).